The primary structure comprises 361 residues: tRNA-specific 2-thiouridylase MnmA (361 aa).

Residues Gly-11–Ser-18 and Met-37 each bind ATP. The tract at residues Asn-97–Asp-99 is interaction with target base in tRNA. Cys-102 acts as the Nucleophile in catalysis. Cys-102 and Cys-199 are joined by a disulfide. Gly-126 is an ATP binding site. Positions Lys-149 to Gln-151 are interaction with tRNA. The active-site Cysteine persulfide intermediate is the Cys-199. The interaction with tRNA stretch occupies residues Arg-311–Tyr-312.

It belongs to the MnmA/TRMU family.

It localises to the cytoplasm. The enzyme catalyses S-sulfanyl-L-cysteinyl-[protein] + uridine(34) in tRNA + AH2 + ATP = 2-thiouridine(34) in tRNA + L-cysteinyl-[protein] + A + AMP + diphosphate + H(+). Catalyzes the 2-thiolation of uridine at the wobble position (U34) of tRNA, leading to the formation of s(2)U34. This chain is tRNA-specific 2-thiouridylase MnmA, found in Cupriavidus taiwanensis (strain DSM 17343 / BCRC 17206 / CCUG 44338 / CIP 107171 / LMG 19424 / R1) (Ralstonia taiwanensis (strain LMG 19424)).